We begin with the raw amino-acid sequence, 207 residues long: Pyridoxine/pyridoxamine 5'-phosphate oxidase (207 aa).

FMN is bound by residues 53 to 58 (RMVLLK), 68 to 69 (YT), lysine 75, and glutamine 97. Lysine 58 is a substrate binding site. Residues tyrosine 115, arginine 119, and serine 123 each contribute to the substrate site. FMN contacts are provided by residues 132-133 (QS) and tryptophan 177. 183–185 (RLH) is a binding site for substrate. An FMN-binding site is contributed by arginine 187.

The protein belongs to the pyridoxamine 5'-phosphate oxidase family. In terms of assembly, homodimer. FMN serves as cofactor.

The catalysed reaction is pyridoxamine 5'-phosphate + O2 + H2O = pyridoxal 5'-phosphate + H2O2 + NH4(+). The enzyme catalyses pyridoxine 5'-phosphate + O2 = pyridoxal 5'-phosphate + H2O2. The protein operates within cofactor metabolism; pyridoxal 5'-phosphate salvage; pyridoxal 5'-phosphate from pyridoxamine 5'-phosphate: step 1/1. It functions in the pathway cofactor metabolism; pyridoxal 5'-phosphate salvage; pyridoxal 5'-phosphate from pyridoxine 5'-phosphate: step 1/1. Catalyzes the oxidation of either pyridoxine 5'-phosphate (PNP) or pyridoxamine 5'-phosphate (PMP) into pyridoxal 5'-phosphate (PLP). This is Pyridoxine/pyridoxamine 5'-phosphate oxidase from Bartonella quintana (strain Toulouse) (Rochalimaea quintana).